Consider the following 146-residue polypeptide: Acidic phospholipase A2 D (146 aa).

The N-terminal stretch at 1–21 (MNPAHLLILAAVCVSPLGASS) is a signal peptide. Positions 22-27 (NRPMPL) are excised as a propeptide. Disulfide bonds link Cys-38–Cys-98, Cys-53–Cys-145, Cys-55–Cys-71, Cys-70–Cys-126, Cys-77–Cys-119, Cys-87–Cys-112, and Cys-105–Cys-117. Ca(2+) contacts are provided by Tyr-54, Gly-56, and Gly-58. The active site involves His-74. Asp-75 serves as a coordination point for Ca(2+). Residue Asp-120 is part of the active site.

The protein belongs to the phospholipase A2 family. Group I subfamily. D49 sub-subfamily. It depends on Ca(2+) as a cofactor. In terms of tissue distribution, expressed by the venom gland.

It localises to the secreted. It carries out the reaction a 1,2-diacyl-sn-glycero-3-phosphocholine + H2O = a 1-acyl-sn-glycero-3-phosphocholine + a fatty acid + H(+). PLA2 catalyzes the calcium-dependent hydrolysis of the 2-acyl groups in 3-sn-phosphoglycerides. This chain is Acidic phospholipase A2 D, found in Naja sputatrix (Malayan spitting cobra).